The chain runs to 282 residues: ATP synthase gamma chain (282 aa).

The protein belongs to the ATPase gamma chain family. F-type ATPases have 2 components, CF(1) - the catalytic core - and CF(0) - the membrane proton channel. CF(1) has five subunits: alpha(3), beta(3), gamma(1), delta(1), epsilon(1). CF(0) has three main subunits: a, b and c.

Its subcellular location is the cell membrane. Functionally, produces ATP from ADP in the presence of a proton gradient across the membrane. The gamma chain is believed to be important in regulating ATPase activity and the flow of protons through the CF(0) complex. The polypeptide is ATP synthase gamma chain (Clostridium botulinum (strain Kyoto / Type A2)).